A 350-amino-acid polypeptide reads, in one-letter code: MGVTSTAPHLLRAARGEIVDRPPVWMMRQAGRYMKAYRDLREKYPSFRDRSEIPEVAIEVSLQPWKAFQPDGVILFSDIVTPLPGLGIEMDIAEGKGPIIHAPIRTQAQIEQLRPLEPEAALPFIKTILQALRQEVGHQSTVLGFVGAPWTLAAYAVEGKGSKTYSIIKNLAFSEPAILHQLLTKLADAIAIYARYQIDSGAQVVQMFDSWAGQLSPQDYDTFALPYQQRVFQQIKQTHPDTPLILLVSGSAGVLERMGQSGADIVTVDWTVDMADARARLGKQMKVQGNLDPGVLYASKQFIRDRIIDTVRKAGNWGHILNLGHGVLPDTPEENVAFFFETAKQLNVLV.

Substrate contacts are provided by residues 28-32 (RQAGR), Asp-78, Tyr-155, Ser-210, and His-325.

Belongs to the uroporphyrinogen decarboxylase family. Homodimer.

It localises to the cytoplasm. The enzyme catalyses uroporphyrinogen III + 4 H(+) = coproporphyrinogen III + 4 CO2. It participates in porphyrin-containing compound metabolism; protoporphyrin-IX biosynthesis; coproporphyrinogen-III from 5-aminolevulinate: step 4/4. Functionally, catalyzes the decarboxylation of four acetate groups of uroporphyrinogen-III to yield coproporphyrinogen-III. The protein is Uroporphyrinogen decarboxylase of Trichormus variabilis (strain ATCC 29413 / PCC 7937) (Anabaena variabilis).